The primary structure comprises 411 residues: Flagellum-associated coiled-coil domain-containing protein 1 (411 aa).

A disordered region spans residues 52 to 77; sequence SQPAKSTAFPRDKAQSRKLEESNKAP. A compositionally biased stretch (basic and acidic residues) spans 61 to 74; the sequence is PRDKAQSRKLEESN. 2 coiled-coil regions span residues 124-220 and 278-328; these read SDII…LKNM and NESF…VVLE. Lysine 353 is subject to N6-acetyllysine. Positions 355 to 385 form a coiled coil; it reads FQTKLAEAEEKYKSTIQVLTEENNSLRQKVL.

The protein resides in the cytoplasm. The protein localises to the cytoplasmic granule. It is found in the cell projection. Its subcellular location is the cilium. It localises to the flagellum. In Rattus norvegicus (Rat), this protein is Flagellum-associated coiled-coil domain-containing protein 1.